The chain runs to 334 residues: L-lactate dehydrogenase B-A chain (334 aa).

NAD(+) contacts are provided by residues 30–58 (GQVGMACAVSVLLRELADELALVDVVEDR) and arginine 100. 3 residues coordinate substrate: arginine 107, asparagine 139, and arginine 170. Residue asparagine 139 participates in NAD(+) binding. Histidine 194 functions as the Proton acceptor in the catalytic mechanism. Threonine 249 provides a ligand contact to substrate.

The protein belongs to the LDH/MDH superfamily. LDH family. In terms of assembly, homotetramer.

Its subcellular location is the cytoplasm. It catalyses the reaction (S)-lactate + NAD(+) = pyruvate + NADH + H(+). The protein operates within fermentation; pyruvate fermentation to lactate; (S)-lactate from pyruvate: step 1/1. The protein is L-lactate dehydrogenase B-A chain (ldhba) of Danio rerio (Zebrafish).